We begin with the raw amino-acid sequence, 204 residues long: Ricin B-like lectin R40G3 (204 aa).

A Ricin B-type lectin domain is found at 54–200 (TVKVYCRANP…CEGDNQRWKI (147 aa)).

Expressed in shoots and lamina.

In terms of biological role, lectin which binds carbohydrates in vitro. Interacts through its lectin domain with glycan structures containing specific motifs. This Oryza sativa subsp. japonica (Rice) protein is Ricin B-like lectin R40G3.